Here is a 247-residue protein sequence, read N- to C-terminus: 2,5-diamino-6-ribosylamino-4(3H)-pyrimidinone 5'-phosphate reductase (247 aa).

Residues T75, D79, G165, and 187–191 (GASII) contribute to the NADP(+) site.

This sequence belongs to the HTP reductase family. Homodimer.

It catalyses the reaction 2,5-diamino-6-(1-D-ribitylamino)pyrimidin-4(3H)-one 5'-phosphate + NADP(+) = 2,5-diamino-6-(1-D-ribosylamino)pyrimidin-4(3H)-one 5'-phosphate + NADPH + H(+). The catalysed reaction is 2,5-diamino-6-(1-D-ribitylamino)pyrimidin-4(3H)-one 5'-phosphate + NAD(+) = 2,5-diamino-6-(1-D-ribosylamino)pyrimidin-4(3H)-one 5'-phosphate + NADH + H(+). The protein operates within cofactor biosynthesis; riboflavin biosynthesis. Catalyzes an early step in riboflavin biosynthesis, the NADPH-dependent reduction of the ribose side chain of 2,5-diamino-6-ribosylamino-4(3H)-pyrimidinone 5'-phosphate, yielding 2,5-diamino-6-ribitylamino-4(3H)-pyrimidinone 5'-phosphate. In Debaryomyces hansenii (strain ATCC 36239 / CBS 767 / BCRC 21394 / JCM 1990 / NBRC 0083 / IGC 2968) (Yeast), this protein is 2,5-diamino-6-ribosylamino-4(3H)-pyrimidinone 5'-phosphate reductase (RIB7).